Consider the following 91-residue polypeptide: ATP synthase subunit c (91 aa).

Transmembrane regions (helical) follow at residues 4 to 24 (FTMC…GTGI) and 53 to 73 (IGLA…LIIL).

It belongs to the ATPase C chain family. In terms of assembly, F-type ATPases have 2 components, F(1) - the catalytic core - and F(0) - the membrane proton channel. F(1) has five subunits: alpha(3), beta(3), gamma(1), delta(1), epsilon(1). F(0) has three main subunits: a(1), b(2) and c(10-14). The alpha and beta chains form an alternating ring which encloses part of the gamma chain. F(1) is attached to F(0) by a central stalk formed by the gamma and epsilon chains, while a peripheral stalk is formed by the delta and b chains.

Its subcellular location is the cell inner membrane. In terms of biological role, f(1)F(0) ATP synthase produces ATP from ADP in the presence of a proton or sodium gradient. F-type ATPases consist of two structural domains, F(1) containing the extramembraneous catalytic core and F(0) containing the membrane proton channel, linked together by a central stalk and a peripheral stalk. During catalysis, ATP synthesis in the catalytic domain of F(1) is coupled via a rotary mechanism of the central stalk subunits to proton translocation. Key component of the F(0) channel; it plays a direct role in translocation across the membrane. A homomeric c-ring of between 10-14 subunits forms the central stalk rotor element with the F(1) delta and epsilon subunits. The sequence is that of ATP synthase subunit c from Trichlorobacter lovleyi (strain ATCC BAA-1151 / DSM 17278 / SZ) (Geobacter lovleyi).